The chain runs to 391 residues: Acetate kinase (391 aa).

Mg(2+) is bound at residue Asn-7. Lys-14 contacts ATP. Arg-88 provides a ligand contact to substrate. The Proton donor/acceptor role is filled by Asp-145. ATP is bound by residues 203-207, 278-280, and 326-330; these read HAGNG, DAR, and GMGEN. Glu-378 is a binding site for Mg(2+).

It belongs to the acetokinase family. Homodimer. Mg(2+) is required as a cofactor. The cofactor is Mn(2+).

It localises to the cytoplasm. It carries out the reaction acetate + ATP = acetyl phosphate + ADP. The protein operates within metabolic intermediate biosynthesis; acetyl-CoA biosynthesis; acetyl-CoA from acetate: step 1/2. Functionally, catalyzes the formation of acetyl phosphate from acetate and ATP. Can also catalyze the reverse reaction. In Phytoplasma mali (strain AT), this protein is Acetate kinase.